Reading from the N-terminus, the 266-residue chain is Undecaprenyl-diphosphatase (266 aa).

7 helical membrane-spanning segments follow: residues 41-61 (NLAF…VILW), 82-102 (YVIN…FFKD), 106-126 (AIFG…AALL), 140-160 (ISMK…LPGL), 180-200 (LAQF…LLDG), 213-233 (IPTL…CLAC), and 245-265 (LIYF…VSQL).

It belongs to the UppP family.

It localises to the cell inner membrane. The catalysed reaction is di-trans,octa-cis-undecaprenyl diphosphate + H2O = di-trans,octa-cis-undecaprenyl phosphate + phosphate + H(+). Catalyzes the dephosphorylation of undecaprenyl diphosphate (UPP). Confers resistance to bacitracin. This chain is Undecaprenyl-diphosphatase, found in Bacteroides fragilis (strain YCH46).